Here is a 363-residue protein sequence, read N- to C-terminus: Small ribosomal subunit biogenesis GTPase RsgA (363 aa).

Positions 112–268 (HQQVIAANID…LIDTPGMREL (157 aa)) constitute a CP-type G domain. Residues 157-160 (TKAD) and 210-218 (GSSGAGKST) each bind GTP. Zn(2+) is bound by residues Cys291, Cys296, His298, and Cys304. The disordered stretch occupies residues 340-363 (RVAQNNRGKGSGKRPASVDRPGRR).

The protein belongs to the TRAFAC class YlqF/YawG GTPase family. RsgA subfamily. As to quaternary structure, monomer. Associates with 30S ribosomal subunit, binds 16S rRNA. It depends on Zn(2+) as a cofactor.

It localises to the cytoplasm. Its function is as follows. One of several proteins that assist in the late maturation steps of the functional core of the 30S ribosomal subunit. Helps release RbfA from mature subunits. May play a role in the assembly of ribosomal proteins into the subunit. Circularly permuted GTPase that catalyzes slow GTP hydrolysis, GTPase activity is stimulated by the 30S ribosomal subunit. The polypeptide is Small ribosomal subunit biogenesis GTPase RsgA (Xanthomonas campestris pv. campestris (strain 8004)).